The following is a 212-amino-acid chain: Pyridoxine/pyridoxamine 5'-phosphate oxidase (212 aa).

Residues 7 to 10 and Lys-65 contribute to the substrate site; that span reads REEY. FMN is bound by residues 60-65, 75-76, Lys-82, and Gln-104; these read RTVLLK and FT. Tyr-122, Arg-126, and Ser-130 together coordinate substrate. FMN is bound by residues 139-140 and Trp-184; that span reads QS. Residue 190 to 192 participates in substrate binding; it reads RLH. Arg-194 contributes to the FMN binding site.

It belongs to the pyridoxamine 5'-phosphate oxidase family. Homodimer. It depends on FMN as a cofactor.

It carries out the reaction pyridoxamine 5'-phosphate + O2 + H2O = pyridoxal 5'-phosphate + H2O2 + NH4(+). It catalyses the reaction pyridoxine 5'-phosphate + O2 = pyridoxal 5'-phosphate + H2O2. It functions in the pathway cofactor metabolism; pyridoxal 5'-phosphate salvage; pyridoxal 5'-phosphate from pyridoxamine 5'-phosphate: step 1/1. The protein operates within cofactor metabolism; pyridoxal 5'-phosphate salvage; pyridoxal 5'-phosphate from pyridoxine 5'-phosphate: step 1/1. In terms of biological role, catalyzes the oxidation of either pyridoxine 5'-phosphate (PNP) or pyridoxamine 5'-phosphate (PMP) into pyridoxal 5'-phosphate (PLP). This Rippkaea orientalis (strain PCC 8801 / RF-1) (Cyanothece sp. (strain PCC 8801)) protein is Pyridoxine/pyridoxamine 5'-phosphate oxidase.